Reading from the N-terminus, the 305-residue chain is Hydrogen peroxide-inducible genes activator (305 aa).

Positions 1–58 (MNIRDLEYLVALAEHRHFRRAADSCHVSQPTLSGQIRKLEDELGVMLLERTSRKVLFT) constitute an HTH lysR-type domain. The segment at residues 18-37 (FRRAADSCHVSQPTLSGQIR) is a DNA-binding region (H-T-H motif). 2 cysteine pairs are disulfide-bonded: Cys-180/Cys-259 and Cys-199/Cys-208. Cysteine sulfenic acid (-SOH); alternate is present on Cys-199. S-glutathionyl cysteine; alternate is present on Cys-199. At Cys-199 the chain carries S-nitrosocysteine; alternate.

The protein belongs to the LysR transcriptional regulatory family. In terms of assembly, homodimer and homotetramer. In terms of processing, oxidized on Cys-199; the Cys-SOH formed in response to oxidative signaling triggers a conformational change and the onset of transcriptional activity with a specific DNA-binding affinity. Cys-199-SOH rapidly reacts with Cys-208-SH to form a disulfide bond. S-nitrosylation in response to nitrosative signaling triggers a conformational change and the onset of transcriptional activity with a specific DNA-binding affinity. Post-translationally, glutathionylation in response to redox signaling triggers the onset of transcriptional activity with a specific DNA-binding affinity.

Its activity is regulated as follows. Activated by oxidation of Cys-199 resulting in the alternative formation of cystine, sulfenic acid, S-nitroso- or glutathione-bound cysteine. Functionally, hydrogen peroxide sensor. Activates the expression of a regulon of hydrogen peroxide-inducible genes such as katG, gor, ahpC, ahpF, oxyS (a regulatory RNA), dps, fur and grxA. OxyR expression is negatively autoregulated by binding to a 43 bp region upstream of its own coding sequence. OxyR is inactivated by reduction of its essential disulfide bond by the product of GrxA, itself positively regulated by OxyR. Also has a positive regulatory effect on the production of surface proteins that control the colony morphology and auto-aggregation ability. This chain is Hydrogen peroxide-inducible genes activator (oxyR), found in Escherichia coli O157:H7.